The chain runs to 350 residues: GTPase Obg (350 aa).

In terms of domain architecture, Obg spans 1 to 159; it reads MKFLDQAKIY…RWIWLRLKLI (159 aa). The OBG-type G domain maps to 160–328; sequence ADVGLVGLPN…VLRLLQDRVT (169 aa). Residues 166 to 173, 191 to 195, 213 to 216, 280 to 283, and 309 to 311 each bind GTP; these read GLPNAGKS, FTTLH, DIPG, NKID, and SGV. Ser-173 and Thr-193 together coordinate Mg(2+). The segment at 331-350 is disordered; sequence REAARDAAPPQAAAGREETA.

This sequence belongs to the TRAFAC class OBG-HflX-like GTPase superfamily. OBG GTPase family. In terms of assembly, monomer. Requires Mg(2+) as cofactor.

It is found in the cytoplasm. Its function is as follows. An essential GTPase which binds GTP, GDP and possibly (p)ppGpp with moderate affinity, with high nucleotide exchange rates and a fairly low GTP hydrolysis rate. Plays a role in control of the cell cycle, stress response, ribosome biogenesis and in those bacteria that undergo differentiation, in morphogenesis control. This chain is GTPase Obg, found in Gluconacetobacter diazotrophicus (strain ATCC 49037 / DSM 5601 / CCUG 37298 / CIP 103539 / LMG 7603 / PAl5).